A 133-amino-acid polypeptide reads, in one-letter code: Ribonuclease VapC1 (133 aa).

Mg(2+)-binding residues include Asp7 and Asp98.

The protein belongs to the PINc/VapC protein family. The cofactor is Mg(2+).

Its function is as follows. Toxic component of a type II toxin-antitoxin (TA) system. The cognate antitoxin is VapB1. The chain is Ribonuclease VapC1 from Mycobacterium tuberculosis (strain CDC 1551 / Oshkosh).